The following is a 474-amino-acid chain: P2X purinoceptor 2 (474 aa).

Residues 1–42 (MAATHPKAPTAQRLRQGWSAFWDYETPKVIVVRNRPLGVVYR) are Cytoplasmic-facing. A helical membrane pass occupies residues 43-60 (AVQLLILLYFVWYVFIVQ). At 61–333 (KSYQDSETGP…IVHGQAGKFS (273 aa)) the chain is on the extracellular side. The ATP site is built by Lys77 and Lys79. Disulfide bonds link Cys121–Cys172, Cys132–Cys155, and Cys138–Cys166. Asn129 carries an N-linked (GlcNAc...) asparagine glycan. An N-linked (GlcNAc...) asparagine glycan is attached at Asn190. Thr192 lines the ATP pocket. A disulfide bond links Cys222 and Cys232. Asn247 is a glycosylation site (N-linked (GlcNAc...) asparagine). Cysteines 266 and 275 form a disulfide. Residues Ser292, Asn296, and Arg298 each coordinate ATP. A glycan (N-linked (GlcNAc...) asparagine) is linked at Asn306. Residue Lys315 coordinates ATP. A pore-forming motif region spans residues 316–329 (AYGIRIDVIVHGQA). A helical membrane pass occupies residues 334-354 (LIPTIINLATALTSIGVGSFL). The Cytoplasmic portion of the chain corresponds to 355-474 (CDWILLTFMN…PTDPKGLAQL (120 aa)). The tract at residues 445–474 (PDRCVGQGLPSSESPLQDSTPTDPKGLAQL) is disordered. Residues 453–466 (LPSSESPLQDSTPT) show a composition bias toward polar residues.

It belongs to the P2X receptor family. In terms of assembly, homotrimer and heterotrimer; functional P2XRs are organized as homomeric and heteromeric trimers. Homotrimer. Forms heterodimer with P2RX1. Forms heterotrimer with P2RX6. Forms heterotrimer with P2RX3. Express in organ of Corti.

It is found in the cell membrane. The enzyme catalyses Ca(2+)(in) = Ca(2+)(out). It catalyses the reaction K(+)(in) = K(+)(out). It carries out the reaction Na(+)(in) = Na(+)(out). Its activity is regulated as follows. Fast activation by external ATP. Exhibits slow desensitization during prolonged ATP activation. Not sensitive to the ATP agonist:alpha/beta-methylene-ATP. ATP-gated nonselective transmembrane cation channel permeable to potassium, sodium and calcium. Activation by extracellular ATP induces a variety of cellular responses, such as excitatory postsynaptic responses in sensory neurons, neuromuscular junctions (NMJ) formation, hearing, perception of taste and peristalsis. In the inner ear, regulates sound transduction and auditory neurotransmission, outer hair cell electromotility, inner ear gap junctions, and K(+) recycling. Mediates synaptic transmission between neurons and from neurons to smooth muscle. This chain is P2X purinoceptor 2 (P2RX2), found in Cavia porcellus (Guinea pig).